Here is a 30-residue protein sequence, read N- to C-terminus: Cycloviolacin-O2 (30 aa).

Residues 1–30 (GIPCGESCVWIPCISSAIGCSCKSKVCYRN) constitute a cross-link (cyclopeptide (Gly-Asn)). Cystine bridges form between Cys4/Cys20, Cys8/Cys22, and Cys13/Cys27.

Post-translationally, this is a cyclic peptide.

Functionally, probably participates in a plant defense mechanism. This Viola biflora (Yellow wood violet) protein is Cycloviolacin-O2.